A 185-amino-acid chain; its full sequence is Neuronal vesicle trafficking-associated protein 1 (185 aa).

Residues 1 to 82 are Cytoplasmic-facing; sequence MVKLGNNFAE…ITEGVTERFK (82 aa). Residues 83-103 form a helical; Signal-anchor for type II membrane protein membrane-spanning segment; it reads VSVLVLFALAFLTCVVFLVVY. Residues 104–185 lie on the Lumenal side of the membrane; the sequence is KVYKYDRACP…QETEAAEKSA (82 aa). The tract at residues 129–164 is required for GRIP1 interaction; the sequence is ESYYTEQDSSAREKFYTVINHYNLAKQSITRSVSPW.

The protein belongs to the NSG family. In terms of assembly, forms a complex with GRIP1, GRIA2 and STX12; controls the intracellular fate of AMPAR and the endosomal sorting of the GRIA2 subunit toward recycling and membrane targeting. Interacts with GRIP1. Interacts with STX12. Interacts with APP; could regulate APP processing. Interacts with FAM171A1. Widely expressed in brain and spinal cord. Expressed in neurons during maturation and synapse formation.

The protein localises to the membrane. It is found in the golgi apparatus. It localises to the trans-Golgi network membrane. Its subcellular location is the endosome membrane. The protein resides in the cell projection. The protein localises to the dendrite. It is found in the early endosome membrane. It localises to the late endosome membrane. Its subcellular location is the lysosome lumen. The protein resides in the recycling endosome membrane. The protein localises to the cytoplasmic vesicle membrane. It is found in the golgi stack membrane. It localises to the endosome. Its subcellular location is the multivesicular body membrane. The protein resides in the endoplasmic reticulum membrane. Plays a role in the recycling mechanism in neurons of multiple receptors, including AMPAR, APP and L1CAM and acts at the level of early endosomes to promote sorting of receptors toward a recycling pathway. Regulates sorting and recycling of GRIA2 through interaction with GRIP1 and then contributes to the regulation of synaptic transmission and plasticity by affecting the recycling and targeting of AMPA receptors to the synapse. Is required for faithful sorting of L1CAM to axons by facilitating trafficking from somatodendritic early endosome or the recycling endosome. In an other hand, induces apoptosis via the activation of CASP3 in response to DNA damage. The polypeptide is Neuronal vesicle trafficking-associated protein 1 (Rattus norvegicus (Rat)).